We begin with the raw amino-acid sequence, 259 residues long: Ribonuclease HII (259 aa).

An RNase H type-2 domain is found at 70-258 (TLIVGIDEVG…VKSLVLGKKE (189 aa)). A divalent metal cation-binding residues include Asp76, Glu77, and Asp168.

Belongs to the RNase HII family. The cofactor is Mn(2+). It depends on Mg(2+) as a cofactor.

The protein resides in the cytoplasm. The catalysed reaction is Endonucleolytic cleavage to 5'-phosphomonoester.. Endonuclease that specifically degrades the RNA of RNA-DNA hybrids. This Streptococcus pneumoniae serotype 2 (strain D39 / NCTC 7466) protein is Ribonuclease HII.